We begin with the raw amino-acid sequence, 951 residues long: Protocadherin-20 (951 aa).

The signal sequence occupies residues 1–60; the sequence is MRGRGNARSSQALGVSWCPATWHPRLDMGRLHRPRSSTSYRNLPHLFLFFLFVGPFSCLG. At 61 to 890 the chain is on the extracellular side; that stretch reads SYSRATELLY…VESVSCMPTL (830 aa). 6 Cadherin domains span residues 64-209, 210-320, 321-535, 536-639, 640-742, and 746-863; these read RATE…APQF, PVSQ…CPLF, TDSQ…APIF, LQPL…SPRF, INKD…PPLV, and QSNM…EPEI. An N-linked (GlcNAc...) asparagine glycan is attached at asparagine 135. N-linked (GlcNAc...) asparagine glycans are attached at residues asparagine 326 and asparagine 332. 5 N-linked (GlcNAc...) asparagine glycosylation sites follow: asparagine 680, asparagine 748, asparagine 803, asparagine 844, and asparagine 849. The helical transmembrane segment at 891–911 threads the bilayer; that stretch reads VALSVISLGSITLVTGMGIYI. Residues 912 to 951 are Cytoplasmic-facing; that stretch reads CLRKGEKHPREDENLEVQIPLKGKIDLHMRERKPMDISNI.

Its subcellular location is the cell membrane. Potential calcium-dependent cell-adhesion protein. The protein is Protocadherin-20 (PCDH20) of Homo sapiens (Human).